We begin with the raw amino-acid sequence, 143 residues long: Large ribosomal subunit protein uL13 (143 aa).

Belongs to the universal ribosomal protein uL13 family. As to quaternary structure, part of the 50S ribosomal subunit.

In terms of biological role, this protein is one of the early assembly proteins of the 50S ribosomal subunit, although it is not seen to bind rRNA by itself. It is important during the early stages of 50S assembly. The chain is Large ribosomal subunit protein uL13 from Finegoldia magna (strain ATCC 29328 / DSM 20472 / WAL 2508) (Peptostreptococcus magnus).